The primary structure comprises 1085 residues: Carbamoyl phosphate synthase large chain (1085 aa).

A carboxyphosphate synthetic domain region spans residues 1–399 (MPKRTDISNI…ALQKALCSLE (399 aa)). ATP is bound by residues Arg-127, Arg-167, Gly-174, Glu-206, Leu-208, Glu-213, Gly-239, Val-240, His-241, Gln-283, and Glu-297. Residues 131–326 (KEAMLKIGMD…IAKVATMLAV (196 aa)) enclose the ATP-grasp 1 domain. Positions 283, 297, and 299 each coordinate Mg(2+). Mn(2+)-binding residues include Gln-283, Glu-297, and Asn-299. An oligomerization domain region spans residues 400–552 (NNWLGFESLS…APNPLPPIEN (153 aa)). The carbamoyl phosphate synthetic domain stretch occupies residues 553-951 (KQEKKEKKIL…AFFKAQTACF (399 aa)). The ATP-grasp 2 domain occupies 678 to 871 (SLFLKELDIK…LAKVATRVMV (194 aa)). Residues Arg-714, Lys-756, Leu-758, Glu-763, Gly-788, Ile-789, His-790, Ser-791, Gln-830, and Glu-842 each contribute to the ATP site. The Mg(2+) site is built by Gln-830, Glu-842, and Asn-844. Mn(2+) is bound by residues Gln-830, Glu-842, and Asn-844. Positions 952–1085 (NPIKNKGLIF…ELLALQDYLK (134 aa)) constitute an MGS-like domain. Residues 952–1085 (NPIKNKGLIF…ELLALQDYLK (134 aa)) are allosteric domain.

It belongs to the CarB family. In terms of assembly, composed of two chains; the small (or glutamine) chain promotes the hydrolysis of glutamine to ammonia, which is used by the large (or ammonia) chain to synthesize carbamoyl phosphate. Tetramer of heterodimers (alpha,beta)4. The cofactor is Mg(2+). Requires Mn(2+) as cofactor.

It catalyses the reaction hydrogencarbonate + L-glutamine + 2 ATP + H2O = carbamoyl phosphate + L-glutamate + 2 ADP + phosphate + 2 H(+). It carries out the reaction hydrogencarbonate + NH4(+) + 2 ATP = carbamoyl phosphate + 2 ADP + phosphate + 2 H(+). Its pathway is amino-acid biosynthesis; L-arginine biosynthesis; carbamoyl phosphate from bicarbonate: step 1/1. It participates in pyrimidine metabolism; UMP biosynthesis via de novo pathway; (S)-dihydroorotate from bicarbonate: step 1/3. Its function is as follows. Large subunit of the glutamine-dependent carbamoyl phosphate synthetase (CPSase). CPSase catalyzes the formation of carbamoyl phosphate from the ammonia moiety of glutamine, carbonate, and phosphate donated by ATP, constituting the first step of 2 biosynthetic pathways, one leading to arginine and/or urea and the other to pyrimidine nucleotides. The large subunit (synthetase) binds the substrates ammonia (free or transferred from glutamine from the small subunit), hydrogencarbonate and ATP and carries out an ATP-coupled ligase reaction, activating hydrogencarbonate by forming carboxy phosphate which reacts with ammonia to form carbamoyl phosphate. This Helicobacter pylori (strain ATCC 700392 / 26695) (Campylobacter pylori) protein is Carbamoyl phosphate synthase large chain.